The primary structure comprises 416 residues: Squalene synthase (416 aa).

The NADP(+) site is built by Arg52 and Arg77. Mg(2+) contacts are provided by Asp80, Glu83, and Asp84. NADP(+) is bound at residue Arg218. The chain crosses the membrane as a helical span at residues 284 to 304; the sequence is SVFNFCAIPQVMAIATLAACY. The NADP(+) site is built by Lys315 and Arg317. A helical membrane pass occupies residues 384 to 404; sequence PIYLSFIMLLAALSWQYLSTL.

This sequence belongs to the phytoene/squalene synthase family. It depends on Mg(2+) as a cofactor.

The protein resides in the endoplasmic reticulum membrane. It carries out the reaction 2 (2E,6E)-farnesyl diphosphate + NADPH + H(+) = squalene + 2 diphosphate + NADP(+). It catalyses the reaction 2 (2E,6E)-farnesyl diphosphate + NADH + H(+) = squalene + 2 diphosphate + NAD(+). The catalysed reaction is presqualene diphosphate + NADH + H(+) = squalene + diphosphate + NAD(+). The enzyme catalyses presqualene diphosphate + NADPH + H(+) = squalene + diphosphate + NADP(+). It carries out the reaction 2 (2E,6E)-farnesyl diphosphate = presqualene diphosphate + diphosphate. It functions in the pathway terpene metabolism; lanosterol biosynthesis; lanosterol from farnesyl diphosphate: step 1/3. Its function is as follows. Catalyzes the condensation of 2 farnesyl pyrophosphate (FPP) moieties to form squalene. Proceeds in two distinct steps. In the first half-reaction, two molecules of FPP react to form the stable presqualene diphosphate intermediate (PSQPP), with concomitant release of a proton and a molecule of inorganic diphosphate. In the second half-reaction, PSQPP undergoes heterolysis, isomerization, and reduction with NADPH or NADH to form squalene. It is the first committed enzyme of the sterol biosynthesis pathway. The polypeptide is Squalene synthase (Fdft1) (Mus musculus (Mouse)).